A 449-amino-acid chain; its full sequence is UDP-N-acetylmuramoylalanine--D-glutamate ligase (449 aa).

Residue 111–117 (GTNGKST) participates in ATP binding.

This sequence belongs to the MurCDEF family.

The protein resides in the cytoplasm. The catalysed reaction is UDP-N-acetyl-alpha-D-muramoyl-L-alanine + D-glutamate + ATP = UDP-N-acetyl-alpha-D-muramoyl-L-alanyl-D-glutamate + ADP + phosphate + H(+). Its pathway is cell wall biogenesis; peptidoglycan biosynthesis. Its function is as follows. Cell wall formation. Catalyzes the addition of glutamate to the nucleotide precursor UDP-N-acetylmuramoyl-L-alanine (UMA). The polypeptide is UDP-N-acetylmuramoylalanine--D-glutamate ligase (Rickettsia felis (strain ATCC VR-1525 / URRWXCal2) (Rickettsia azadi)).